Here is a 329-residue protein sequence, read N- to C-terminus: NAD kinase (329 aa).

The disordered stretch occupies residues 1–26 (MTTPGTDHNADQGADSGDKATKAASG). Residue aspartate 104 is the Proton acceptor of the active site. NAD(+) is bound by residues 104 to 105 (DG), arginine 109, 179 to 180 (NE), aspartate 209, and 220 to 225 (TAYAFS).

It belongs to the NAD kinase family. A divalent metal cation serves as cofactor.

It is found in the cytoplasm. The catalysed reaction is NAD(+) + ATP = ADP + NADP(+) + H(+). In terms of biological role, involved in the regulation of the intracellular balance of NAD and NADP, and is a key enzyme in the biosynthesis of NADP. Catalyzes specifically the phosphorylation on 2'-hydroxyl of the adenosine moiety of NAD to yield NADP. The polypeptide is NAD kinase (Corynebacterium jeikeium (strain K411)).